The primary structure comprises 90 residues: Small ribosomal subunit protein bS18 (90 aa).

Residues 1–23 are disordered; that stretch reads MKPMRQKNTRAQGNKSISNALAS. Residues 9-21 show a composition bias toward polar residues; that stretch reads TRAQGNKSISNAL.

It belongs to the bacterial ribosomal protein bS18 family. Part of the 30S ribosomal subunit. Forms a tight heterodimer with protein bS6.

Functionally, binds as a heterodimer with protein bS6 to the central domain of the 16S rRNA, where it helps stabilize the platform of the 30S subunit. The sequence is that of Small ribosomal subunit protein bS18 from Chlorobium luteolum (strain DSM 273 / BCRC 81028 / 2530) (Pelodictyon luteolum).